A 421-amino-acid chain; its full sequence is Nacrein-like protein M (421 aa).

Asn27 carries an N-linked (GlcNAc...) asparagine glycan. In terms of domain architecture, Alpha-carbonic anhydrase spans 33-420 (AGFSYDRSIC…KNKVTVYKSF (388 aa)). The Zn(2+) site is built by His132, His134, and His157. The span at 197 to 206 (DGFGDEPDDE) shows a compositional bias: acidic residues. The tract at residues 197–303 (DGFGDEPDDE…GENGHKHGCR (107 aa)) is disordered. Residues 207-219 (ECKRILKGHHPDN) are compositionally biased toward basic and acidic residues. The span at 220 to 295 (NENGNGDNGN…NNGDNGNNGE (76 aa)) shows a compositional bias: low complexity. 24 repeat units span residues 225 to 227 (GDN), 228 to 230 (GNN), 231 to 233 (GYN), 234 to 236 (GDN), 237 to 239 (GNN), 240 to 242 (GDN), 243 to 245 (GNN), 246 to 248 (GYN), 249 to 251 (GDN), 252 to 254 (GNN), 255 to 257 (GDN), 258 to 260 (GNN), 261 to 263 (GYN), 264 to 266 (GDN), 267 to 269 (GNN), 270 to 272 (GDN), 273 to 275 (GNN), 276 to 278 (GEN), 279 to 281 (GNN), 282 to 284 (GEN), 285 to 287 (GNN), 288 to 290 (GDN), 291 to 292 (GN), and 294 to 296 (GEN). The 24 X 3 AA approximate tandem repeats of G-X-N stretch occupies residues 225–296 (GDNGNNGYNG…NGDNGNNGEN (72 aa)). 361–362 (TT) is a binding site for substrate.

This sequence belongs to the alpha-carbonic anhydrase family. Homooligomer; disulfide-linked. May also be disulfide-linked to insoluble organic matrix. The cofactor is Zn(2+). Expressed in the mantle.

The protein localises to the secreted. It localises to the extracellular space. The protein resides in the extracellular matrix. The enzyme catalyses hydrogencarbonate + H(+) = CO2 + H2O. In terms of biological role, acts as a negative regulator for calcification in the shells of mollusks. May function both as a calcium concentrator and as a carbonic anhydrase required for production of carbonate ions, which are assembled to CaCO(3) at mineralization sites. Is important for shell formation in both the calcitic prismatic layer and the aragonitic nacreous layerr. Shows inhibitory activity of crystal formation when present in free state but, when attached to the insoluble matrix, may regulate the form and size of aragonite crystal. The polypeptide is Nacrein-like protein M (Pinctada maxima (Silver-lipped pearl oyster)).